The chain runs to 118 residues: Ribonuclease P protein component (118 aa).

It belongs to the RnpA family. As to quaternary structure, consists of a catalytic RNA component (M1 or rnpB) and a protein subunit.

The catalysed reaction is Endonucleolytic cleavage of RNA, removing 5'-extranucleotides from tRNA precursor.. Its function is as follows. RNaseP catalyzes the removal of the 5'-leader sequence from pre-tRNA to produce the mature 5'-terminus. It can also cleave other RNA substrates such as 4.5S RNA. The protein component plays an auxiliary but essential role in vivo by binding to the 5'-leader sequence and broadening the substrate specificity of the ribozyme. The sequence is that of Ribonuclease P protein component from Rickettsia conorii (strain ATCC VR-613 / Malish 7).